Consider the following 467-residue polypeptide: Putative gluconeogenesis factor (467 aa).

Over residues 1 to 12 (MSAPPAPPPDRS) the composition is skewed to pro residues. Residues 1–27 (MSAPPAPPPDRSAPPDRTDSAQTEPTR) are disordered.

Belongs to the gluconeogenesis factor family.

The protein localises to the cytoplasm. In terms of biological role, required for morphogenesis under gluconeogenic growth conditions. The chain is Putative gluconeogenesis factor from Deinococcus radiodurans (strain ATCC 13939 / DSM 20539 / JCM 16871 / CCUG 27074 / LMG 4051 / NBRC 15346 / NCIMB 9279 / VKM B-1422 / R1).